The sequence spans 456 residues: MFS-type transporter ppzB (456 aa).

5 helical membrane-spanning segments follow: residues 1-21, 38-58, 72-92, 125-145, and 154-174; these read MGLF…PFIM, GFLA…GWAA, VFLF…LLVV, IGTI…LGGV, and AVFA…GLVI. Residues 206 to 225 form a disordered region; that stretch reads EAQERTHEGTPLLPQDDDDD. Transmembrane regions (helical) follow at residues 255-275, 284-304, 318-338, 348-368, 398-418, and 427-447; these read LAML…ATVP, FSSL…FALG, AAAT…GLPE, VALF…VTSP, FGFS…LGGV, and VMGA…FLFV.

This sequence belongs to the major facilitator superfamily. TCR/Tet family.

The protein resides in the membrane. In terms of biological role, MFS-type transporter; part of the gene cluster that mediates the biosynthesis of pyrrolopyrazines, secondary metabolites showing insecticidal activity. Probably involved in the secretion of peramine and other pyrrolopyrazines. The protein is MFS-type transporter ppzB (ppzB) of Metarhizium majus (strain ARSEF 297).